The following is a 410-amino-acid chain: Dual-specificity RNA methyltransferase RlmN (410 aa).

The disordered stretch occupies residues 7–26 (VSSENLDGQQQSSSTPASPA). Low complexity predominate over residues 15 to 26 (QQQSSSTPASPA). Glu-120 functions as the Proton acceptor in the catalytic mechanism. One can recognise a Radical SAM core domain in the interval 130–373 (TGSRKTLCIS…CTIRQTRGDD (244 aa)). Cys-137 and Cys-378 form a disulfide bridge. Cys-144, Cys-148, and Cys-151 together coordinate [4Fe-4S] cluster. Residues 200–201 (GE), Ser-232, 254–256 (SLH), and Asn-335 each bind S-adenosyl-L-methionine. The S-methylcysteine intermediate role is filled by Cys-378.

The protein belongs to the radical SAM superfamily. RlmN family. [4Fe-4S] cluster is required as a cofactor.

Its subcellular location is the cytoplasm. It carries out the reaction adenosine(2503) in 23S rRNA + 2 reduced [2Fe-2S]-[ferredoxin] + 2 S-adenosyl-L-methionine = 2-methyladenosine(2503) in 23S rRNA + 5'-deoxyadenosine + L-methionine + 2 oxidized [2Fe-2S]-[ferredoxin] + S-adenosyl-L-homocysteine. The catalysed reaction is adenosine(37) in tRNA + 2 reduced [2Fe-2S]-[ferredoxin] + 2 S-adenosyl-L-methionine = 2-methyladenosine(37) in tRNA + 5'-deoxyadenosine + L-methionine + 2 oxidized [2Fe-2S]-[ferredoxin] + S-adenosyl-L-homocysteine. Its function is as follows. Specifically methylates position 2 of adenine 2503 in 23S rRNA and position 2 of adenine 37 in tRNAs. m2A2503 modification seems to play a crucial role in the proofreading step occurring at the peptidyl transferase center and thus would serve to optimize ribosomal fidelity. The polypeptide is Dual-specificity RNA methyltransferase RlmN (Acinetobacter baumannii (strain AB307-0294)).